Consider the following 883-residue polypeptide: Brevican core protein (883 aa).

The N-terminal stretch at 1–22 is a signal peptide; sequence MIPLLLSLLAALVLTQAPAALA. The 120-residue stretch at 35 to 154 folds into the Ig-like V-type domain; it reads FRVRIGAAQL…SSDAVEVKVK (120 aa). Cystine bridges form between C56–C136, C178–C249, C202–C223, C276–C351, and C300–C321. A glycan (N-linked (GlcNAc...) asparagine) is linked at N129. 2 Link domains span residues 156 to 251 and 256 to 353; these read VVFL…YCYA and GELF…YCFR. N-linked (GlcNAc...) asparagine glycosylation occurs at N336. Positions 389 to 574 are disordered; sequence QEAVESESRG…EDGPSLLPET (186 aa). S413 carries the phosphoserine modification. Residue S413 is glycosylated (O-linked (Xyl...) (chondroitin sulfate) serine). Residues 428-440 show a composition bias toward polar residues; it reads ESETQSVAPPTGS. Positions 441-451 are enriched in acidic residues; the sequence is SEEEGEALEEE. Residues 452-467 are compositionally biased toward basic and acidic residues; that stretch reads ERFKDTETPKEEKEQE. The GPI-anchor amidated serine moiety is linked to residue S622. The 37-residue stretch at 622–658 folds into the EGF-like domain; the sequence is SSGDCIPSPCHNGGTCLEEKEGFRCLCVPGYGGDLCD. 7 cysteine pairs are disulfide-bonded: C626/C637, C631/C646, C648/C657, C692/C784, C760/C776, C791/C834, and C820/C847. The 129-residue stretch at 658–786 folds into the C-type lectin domain; the sequence is DVGLHFCSPG…NYHLSYTCKM (129 aa). Residues 789–849 enclose the Sushi domain; the sequence is VSCGPPPQLP…WEAPQISCVP (61 aa). Residues 859–883 form a disordered region; that stretch reads MTAPEGPRGQLPRQRKALLTPPSSL.

The protein belongs to the aggrecan/versican proteoglycan family. In terms of assembly, interacts with TNR. In terms of processing, O-glycosylated; contains chondroitin sulfate. In terms of tissue distribution, brain.

It localises to the secreted. It is found in the extracellular space. The protein resides in the extracellular matrix. Its subcellular location is the membrane. In terms of biological role, may play a role in the terminally differentiating and the adult nervous system during postnatal development. Could stabilize interactions between hyaluronan (HA) and brain proteoglycans. Isoform 2 may function as a chondroitin sulfate-bearing cell surface receptor. This is Brevican core protein (Bcan) from Rattus norvegicus (Rat).